The primary structure comprises 1050 residues: Beta-galactosidase (1050 aa).

Residues Asn-100 and Asp-199 each contribute to the substrate site. Asp-199 provides a ligand contact to Na(+). Mg(2+)-binding residues include Glu-422, His-424, and Glu-467. Substrate is bound by residues Glu-467 and 543-546; that span reads EYAH. The active-site Proton donor is the Glu-467. Glu-543 functions as the Nucleophile in the catalytic mechanism. Residue Asn-603 coordinates Mg(2+). Na(+)-binding residues include Phe-607 and Asn-610. Residues Asn-610 and Trp-1025 each contribute to the substrate site.

This sequence belongs to the glycosyl hydrolase 2 family. As to quaternary structure, homotetramer. Requires Mg(2+) as cofactor. The cofactor is Na(+).

It catalyses the reaction Hydrolysis of terminal non-reducing beta-D-galactose residues in beta-D-galactosides.. The chain is Beta-galactosidase from Yersinia pestis bv. Antiqua (strain Angola).